A 149-amino-acid polypeptide reads, in one-letter code: 3-hydroxyacyl-[acyl-carrier-protein] dehydratase FabZ (149 aa).

The active site involves His-50.

It belongs to the thioester dehydratase family. FabZ subfamily.

The protein localises to the cytoplasm. The enzyme catalyses a (3R)-hydroxyacyl-[ACP] = a (2E)-enoyl-[ACP] + H2O. Involved in unsaturated fatty acids biosynthesis. Catalyzes the dehydration of short chain beta-hydroxyacyl-ACPs and long chain saturated and unsaturated beta-hydroxyacyl-ACPs. This is 3-hydroxyacyl-[acyl-carrier-protein] dehydratase FabZ from Pediococcus pentosaceus (strain ATCC 25745 / CCUG 21536 / LMG 10740 / 183-1w).